The primary structure comprises 407 residues: 4-hydroxy-3-methylbut-2-en-1-yl diphosphate synthase (ferredoxin) (407 aa).

4 residues coordinate [4Fe-4S] cluster: Cys-316, Cys-319, Cys-350, and Glu-357.

It belongs to the IspG family. [4Fe-4S] cluster serves as cofactor.

The enzyme catalyses (2E)-4-hydroxy-3-methylbut-2-enyl diphosphate + 2 oxidized [2Fe-2S]-[ferredoxin] + H2O = 2-C-methyl-D-erythritol 2,4-cyclic diphosphate + 2 reduced [2Fe-2S]-[ferredoxin] + H(+). Its pathway is isoprenoid biosynthesis; isopentenyl diphosphate biosynthesis via DXP pathway; isopentenyl diphosphate from 1-deoxy-D-xylulose 5-phosphate: step 5/6. Its function is as follows. Converts 2C-methyl-D-erythritol 2,4-cyclodiphosphate (ME-2,4cPP) into 1-hydroxy-2-methyl-2-(E)-butenyl 4-diphosphate. The sequence is that of 4-hydroxy-3-methylbut-2-en-1-yl diphosphate synthase (ferredoxin) from Prochlorococcus marinus (strain SARG / CCMP1375 / SS120).